The sequence spans 37 residues: Cytochrome b6-f complex subunit 5 (37 aa).

A helical transmembrane segment spans residues 5–25 (LLSGIVLGLIVVTLAGLFYAA).

It belongs to the PetG family. The 4 large subunits of the cytochrome b6-f complex are cytochrome b6, subunit IV (17 kDa polypeptide, PetD), cytochrome f and the Rieske protein, while the 4 small subunits are PetG, PetL, PetM and PetN. The complex functions as a dimer.

It localises to the cellular thylakoid membrane. Its function is as follows. Component of the cytochrome b6-f complex, which mediates electron transfer between photosystem II (PSII) and photosystem I (PSI), cyclic electron flow around PSI, and state transitions. PetG is required for either the stability or assembly of the cytochrome b6-f complex. This chain is Cytochrome b6-f complex subunit 5, found in Anabaena variabilis.